We begin with the raw amino-acid sequence, 309 residues long: NADH-cytochrome b5 reductase 1 (309 aa).

The helical transmembrane segment at 29-49 (EFVPYAVALTAVLAGFKLFTG) threads the bilayer. The 106-residue stretch at 60–165 (TEFQEFVLKE…RGPKGAMVYT (106 aa)) folds into the FAD-binding FR-type domain. FAD is bound by residues 145–160 (TTLK…GPKG) and 171–208 (HIGM…KVDL).

The protein belongs to the flavoprotein pyridine nucleotide cytochrome reductase family. Monomer. Component of the 2-(3-amino-3-carboxypropyl)histidine synthase complex composed of dph1, dph2, dph3 and a NADH-dependent reductase, predominantly cbr1. FAD serves as cofactor.

It is found in the mitochondrion outer membrane. It catalyses the reaction 2 Fe(III)-[cytochrome b5] + NADH = 2 Fe(II)-[cytochrome b5] + NAD(+) + H(+). The catalysed reaction is 2 Fe(3+)-[Dph3] + NADH = 2 Fe(2+)-[Dph3] + NAD(+) + H(+). It participates in protein modification; peptidyl-diphthamide biosynthesis. Functionally, NADH-dependent reductase for dph3 and cytochrome b5. Required for the first step of diphthamide biosynthesis, a post-translational modification of histidine which occurs in elongation factor 2. Dph1 and dph2 transfer a 3-amino-3-carboxypropyl (ACP) group from S-adenosyl-L-methionine (SAM) to a histidine residue, the reaction is assisted by a reduction system comprising dph3 and a NADH-dependent reductase, predominantly cbr1. By reducing dph3, also involved in the formation of the tRNA wobble base modification mcm5s 2U (5-methoxycarbonylmethyl-2-thiouridine), mediated by the elongator complex. The cytochrome b5/NADH cytochrome b5 reductase electron transfer system supports the catalytic activity of several sterol biosynthetic enzymes. In Aspergillus clavatus (strain ATCC 1007 / CBS 513.65 / DSM 816 / NCTC 3887 / NRRL 1 / QM 1276 / 107), this protein is NADH-cytochrome b5 reductase 1 (cbr1).